The sequence spans 239 residues: Uridylate kinase (239 aa).

Lysine 12–glycine 15 is an ATP binding site. The tract at residues glycine 21–glycine 26 is involved in allosteric activation by GTP. UMP is bound at residue glycine 55. Glycine 56 and arginine 60 together coordinate ATP. Residues aspartate 75 and threonine 136–threonine 143 contribute to the UMP site. Threonine 163, tyrosine 169, and aspartate 172 together coordinate ATP.

This sequence belongs to the UMP kinase family. As to quaternary structure, homohexamer.

The protein localises to the cytoplasm. It carries out the reaction UMP + ATP = UDP + ADP. It functions in the pathway pyrimidine metabolism; CTP biosynthesis via de novo pathway; UDP from UMP (UMPK route): step 1/1. With respect to regulation, allosterically activated by GTP. Inhibited by UTP. Its function is as follows. Catalyzes the reversible phosphorylation of UMP to UDP. This chain is Uridylate kinase, found in Koribacter versatilis (strain Ellin345).